We begin with the raw amino-acid sequence, 548 residues long: Putative ATP-dependent RNA helicase R290 (548 aa).

Positions 38-206 (INKVINGEDV…CKVLQLKTNE (169 aa)) constitute a Helicase ATP-binding domain. 51-58 (LMTSAGKS) serves as a coordination point for ATP. The DEAH box signature appears at 150–153 (DEAH). The Helicase C-terminal domain maps to 231-376 (DIVPIINKYP…KTQLALLEQM (146 aa)).

This sequence belongs to the DEAD box helicase family. DEAH subfamily.

The catalysed reaction is ATP + H2O = ADP + phosphate + H(+). The sequence is that of Putative ATP-dependent RNA helicase R290 from Acanthamoeba polyphaga mimivirus (APMV).